The primary structure comprises 45 residues: Large ribosomal subunit protein bL34 (45 aa).

Positions 1 to 45 (MTKRTLGGTSRKRKRVSGFRVRMRSHTGRRVIRTRRKRGRSRLAV) are disordered. The span at 10–45 (SRKRKRVSGFRVRMRSHTGRRVIRTRRKRGRSRLAV) shows a compositional bias: basic residues.

The protein belongs to the bacterial ribosomal protein bL34 family.

This is Large ribosomal subunit protein bL34 from Parasynechococcus marenigrum (strain WH8102).